The following is a 499-amino-acid chain: UDP-N-acetylmuramoylalanine--D-glutamate ligase (499 aa).

Position 129-135 (129-135) interacts with ATP; that stretch reads GTNGKTT.

Belongs to the MurCDEF family.

The protein resides in the cytoplasm. The catalysed reaction is UDP-N-acetyl-alpha-D-muramoyl-L-alanine + D-glutamate + ATP = UDP-N-acetyl-alpha-D-muramoyl-L-alanyl-D-glutamate + ADP + phosphate + H(+). Its pathway is cell wall biogenesis; peptidoglycan biosynthesis. In terms of biological role, cell wall formation. Catalyzes the addition of glutamate to the nucleotide precursor UDP-N-acetylmuramoyl-L-alanine (UMA). The protein is UDP-N-acetylmuramoylalanine--D-glutamate ligase of Ralstonia nicotianae (strain ATCC BAA-1114 / GMI1000) (Ralstonia solanacearum).